The primary structure comprises 632 residues: Phosphoglucomutase, chloroplastic (632 aa).

A chloroplast-targeting transit peptide spans 1-72 (MAMESALTST…PSSPSTSVAQ (72 aa)). Arg97 and Ser190 together coordinate alpha-D-glucose 1,6-bisphosphate. Catalysis depends on Ser190, which acts as the Phosphoserine intermediate. Mg(2+)-binding residues include Ser190, Asp355, Asp357, and Asp359. A Phosphoserine modification is found at Ser190. Alpha-D-glucose 1,6-bisphosphate contacts are provided by Asp359, Arg360, Thr423, Glu442, Ser444, and Lys455.

The protein belongs to the phosphohexose mutase family. In terms of assembly, monomer. Mg(2+) is required as a cofactor.

Its subcellular location is the plastid. The protein localises to the chloroplast. It catalyses the reaction alpha-D-glucose 1-phosphate = alpha-D-glucose 6-phosphate. It carries out the reaction O-phospho-L-seryl-[protein] + alpha-D-glucose 1-phosphate = alpha-D-glucose 1,6-bisphosphate + L-seryl-[protein]. The catalysed reaction is alpha-D-glucose 1,6-bisphosphate + L-seryl-[protein] = O-phospho-L-seryl-[protein] + alpha-D-glucose 6-phosphate. Inhibited by the Calvin cycle intermediates fructose-1,6-bisphosphate and ribulose-1,5-bisphosphate. Catalyzes the reversible isomerization of alpha-D-glucose 1-phosphate to alpha-D-glucose 6-phosphate. The mechanism proceeds via the intermediate compound alpha-D-glucose 1,6-bisphosphate. This enzyme participates in both the breakdown and synthesis of glucose. Promotes gravitropic responses, negative in shoots but positive in roots, by facilitating starch granules (statoliths) formation. This chain is Phosphoglucomutase, chloroplastic (PGMP), found in Solanum tuberosum (Potato).